A 323-amino-acid polypeptide reads, in one-letter code: ATP synthase gamma chain (323 aa).

Positions 206–240 (NPIVNLVGFGYKERGVKPINNRRATSDIVGESKSI) are insert.

It belongs to the ATPase gamma chain family. As to quaternary structure, F-type ATPases have 2 components, CF(1) - the catalytic core - and CF(0) - the membrane proton channel. CF(1) has five subunits: alpha(3), beta(3), gamma(1), delta(1), epsilon(1). CF(0) has three main subunits: a, b and c.

It localises to the cell inner membrane. In terms of biological role, produces ATP from ADP in the presence of a proton gradient across the membrane. The gamma chain is believed to be important in regulating ATPase activity and the flow of protons through the CF(0) complex. The protein is ATP synthase gamma chain of Rickettsia conorii (strain ATCC VR-613 / Malish 7).